We begin with the raw amino-acid sequence, 162 residues long: Ribosome maturation factor RimP (162 aa).

Belongs to the RimP family.

It is found in the cytoplasm. Required for maturation of 30S ribosomal subunits. The chain is Ribosome maturation factor RimP from Cupriavidus pinatubonensis (strain JMP 134 / LMG 1197) (Cupriavidus necator (strain JMP 134)).